The sequence spans 128 residues: MPTFNQLVKYGREKRKKKSKAPALQGCPQKRGVCVRVYTVTPKKPNSALRKVARVRLSNGIEVTAYIPGEGHNLQEHSIVLVRGGRVKDLPGVRYKIIRGALDAAGVEGRRQSRSKYGTKRPKEEKGG.

The disordered stretch occupies residues methionine 1–leucine 24. Aspartate 89 is subject to 3-methylthioaspartic acid. The interval alanine 105–glycine 128 is disordered.

The protein belongs to the universal ribosomal protein uS12 family. In terms of assembly, part of the 30S ribosomal subunit. Contacts proteins S8 and S17. May interact with IF1 in the 30S initiation complex.

Its function is as follows. With S4 and S5 plays an important role in translational accuracy. In terms of biological role, interacts with and stabilizes bases of the 16S rRNA that are involved in tRNA selection in the A site and with the mRNA backbone. Located at the interface of the 30S and 50S subunits, it traverses the body of the 30S subunit contacting proteins on the other side and probably holding the rRNA structure together. The combined cluster of proteins S8, S12 and S17 appears to hold together the shoulder and platform of the 30S subunit. In Aquifex aeolicus (strain VF5), this protein is Small ribosomal subunit protein uS12.